The following is a 727-amino-acid chain: Sodium-dependent neutral amino acid transporter SLC6A17 (727 aa).

The Cytoplasmic segment spans residues 1–69; that stretch reads MPKNSKVTQR…RPAWNSKLQY (69 aa). Phosphoserine is present on residues Ser-13 and Ser-20. Residues 70–90 traverse the membrane as a helical segment; it reads ILAQIGFSVGLGNIWRFPYLC. The Extracellular portion of the chain corresponds to 91-95; that stretch reads QKNGG. A helical transmembrane segment spans residues 96–116; the sequence is GAYLVPYLVLLIIIGIPLFFL. At 117–147 the chain is on the cytoplasmic side; that stretch reads ELAVGQRIRRGSIGVWHYICPRLGGIGFSSC. Residues 148–168 form a helical membrane-spanning segment; the sequence is IVCLFVGLYYNVIIGWSIFYF. Residues 169-222 lie on the Extracellular side of the membrane; sequence FKSFQYPLPWSECPVVRNGSVAVVEAECEKSSATTYFWYREALDISDSISESGG. Asn-186 carries an N-linked (GlcNAc...) asparagine glycan. A helical transmembrane segment spans residues 223–243; sequence LNWKMTLCLLVAWSIVGMAVV. The Cytoplasmic segment spans residues 244–253; it reads KGIQSSGKVM. A helical transmembrane segment spans residues 254–274; the sequence is YFSSLFPYVVLACFLVRGLLL. Over 275 to 300 the chain is Extracellular; the sequence is RGAVDGILHMFTPKLDKMLDPQVWRE. The helical transmembrane segment at 301 to 321 threads the bilayer; sequence AATQVFFALGLGFGGVIAFSS. The Cytoplasmic portion of the chain corresponds to 322–334; the sequence is YNKQDNNCHFDAA. Residues 335–355 form a helical membrane-spanning segment; it reads LVSFINFFTSVLATLVVFAVL. Topologically, residues 356 to 460 are extracellular; sequence GFKANIMNEK…HFPASPFWSV (105 aa). Tyr-377 is subject to Phosphotyrosine. Asn-393 carries N-linked (GlcNAc...) asparagine glycosylation. A helical transmembrane segment spans residues 461 to 481; it reads MFFLMLINLGLGSMIGTMAGI. The Cytoplasmic portion of the chain corresponds to 482 to 490; it reads TTPIIDTFK. Residues 491-511 form a helical membrane-spanning segment; that stretch reads VPKEMFTVGCCVFAFLVGLLF. Over 512-527 the chain is Extracellular; that stretch reads VQRSGNYFVTMFDDYS. Residues 528–548 form a helical membrane-spanning segment; the sequence is ATLPLTLIVILENIAVAWIYG. At 549-573 the chain is on the cytoplasmic side; that stretch reads TKKFMQELTEMLGFRPYRFYFYMWK. The helical transmembrane segment at 574–594 threads the bilayer; it reads FVSPLCMAVLTTASIIQLGVT. The Extracellular segment spans residues 595–617; it reads PPGYSAWIKEEAAERYLYFPNWA. Residues 618–638 form a helical membrane-spanning segment; it reads MALLITLIVVATLPIPVVFVL. Topologically, residues 639–727 are cytoplasmic; it reads RHFHLLSDGS…LLASTPESEL (89 aa). 2 positions are modified to phosphoserine: Ser-665 and Ser-701. Residues 680–727 are disordered; sequence VPSEAPSPMPTHRSYLGPGSTSPLETSGNPNGRYGSGYLLASTPESEL. Positions 698–709 are enriched in polar residues; it reads GSTSPLETSGNP.

This sequence belongs to the sodium:neurotransmitter symporter (SNF) (TC 2.A.22) family.

It is found in the cytoplasmic vesicle. Its subcellular location is the secretory vesicle. It localises to the synaptic vesicle membrane. The protein resides in the postsynapse. The protein localises to the presynapse. It catalyses the reaction L-proline(in) + Na(+)(in) = L-proline(out) + Na(+)(out). The catalysed reaction is L-leucine(in) + Na(+)(in) = L-leucine(out) + Na(+)(out). The enzyme catalyses glycine(in) + Na(+)(in) = glycine(out) + Na(+)(out). It carries out the reaction L-alanine(in) + Na(+)(in) = L-alanine(out) + Na(+)(out). It catalyses the reaction L-glutamine(in) + Na(+)(in) = L-glutamine(out) + Na(+)(out). In terms of biological role, synaptic vesicle transporter with apparent selectivity for neutral amino acids. The transport is sodium-coupled but chloride-independent, likely driven by the proton electrochemical gradient generated by vacuolar H(+)-ATPase in an overall electrogenic mechanism. May contribute to the synaptic uptake of neurotransmitter precursors in a process coupled in part to vesicle exocytosis. In Homo sapiens (Human), this protein is Sodium-dependent neutral amino acid transporter SLC6A17.